A 511-amino-acid chain; its full sequence is 2,3-bisphosphoglycerate-independent phosphoglycerate mutase (511 aa).

2 residues coordinate Mn(2+): aspartate 12 and serine 62. Catalysis depends on serine 62, which acts as the Phosphoserine intermediate. Substrate is bound by residues histidine 123, 154-155 (RD), arginine 181, arginine 187, 252-255 (RPDR), and lysine 335. Positions 402, 406, 444, 445, and 462 each coordinate Mn(2+).

The protein belongs to the BPG-independent phosphoglycerate mutase family. In terms of assembly, monomer. Mn(2+) is required as a cofactor.

The catalysed reaction is (2R)-2-phosphoglycerate = (2R)-3-phosphoglycerate. The protein operates within carbohydrate degradation; glycolysis; pyruvate from D-glyceraldehyde 3-phosphate: step 3/5. In terms of biological role, catalyzes the interconversion of 2-phosphoglycerate and 3-phosphoglycerate. In Acholeplasma laidlawii (strain PG-8A), this protein is 2,3-bisphosphoglycerate-independent phosphoglycerate mutase.